The following is a 439-amino-acid chain: Glucose-1-phosphate adenylyltransferase (439 aa).

Alpha-D-glucose 1-phosphate is bound by residues tyrosine 116, glycine 182, 197-198 (EK), and serine 215.

The protein belongs to the bacterial/plant glucose-1-phosphate adenylyltransferase family. In terms of assembly, homotetramer.

It carries out the reaction alpha-D-glucose 1-phosphate + ATP + H(+) = ADP-alpha-D-glucose + diphosphate. It functions in the pathway glycan biosynthesis; glycogen biosynthesis. In terms of biological role, involved in the biosynthesis of ADP-glucose, a building block required for the elongation reactions to produce glycogen. Catalyzes the reaction between ATP and alpha-D-glucose 1-phosphate (G1P) to produce pyrophosphate and ADP-Glc. The polypeptide is Glucose-1-phosphate adenylyltransferase (Pasteurella multocida (strain Pm70)).